A 382-amino-acid polypeptide reads, in one-letter code: Pyrimidine monooxygenase RutA (382 aa).

FMN-binding positions include 68–69 (IK), Asn134, Glu143, 159–160 (RY), and Ser209.

This sequence belongs to the NtaA/SnaA/DszA monooxygenase family. RutA subfamily.

The enzyme catalyses uracil + FMNH2 + NADH + O2 = (Z)-3-ureidoacrylate + FMN + NAD(+) + H2O + H(+). The catalysed reaction is thymine + FMNH2 + NADH + O2 = (Z)-2-methylureidoacrylate + FMN + NAD(+) + H2O + H(+). Its function is as follows. Catalyzes the pyrimidine ring opening between N-3 and C-4 by an unusual flavin hydroperoxide-catalyzed mechanism, adding oxygen atoms in the process to yield ureidoacrylate peracid, that immediately reacts with FMN forming ureidoacrylate and FMN-N(5)-oxide. The FMN-N(5)-oxide reacts spontaneously with NADH to produce FMN. Requires the flavin reductase RutF to regenerate FMN in vivo. The polypeptide is Pyrimidine monooxygenase RutA (Escherichia coli O8 (strain IAI1)).